The sequence spans 232 residues: Orotate phosphoribosyltransferase (232 aa).

Residues Arg-107, Lys-108, Lys-111, and 133–141 each bind 5-phospho-alpha-D-ribose 1-diphosphate; that span reads EDLTTDGGS. Thr-137 provides a ligand contact to orotate.

This sequence belongs to the purine/pyrimidine phosphoribosyltransferase family. PyrE subfamily. Homodimer. Mg(2+) is required as a cofactor.

The enzyme catalyses orotidine 5'-phosphate + diphosphate = orotate + 5-phospho-alpha-D-ribose 1-diphosphate. The protein operates within pyrimidine metabolism; UMP biosynthesis via de novo pathway; UMP from orotate: step 1/2. Its function is as follows. Catalyzes the transfer of a ribosyl phosphate group from 5-phosphoribose 1-diphosphate to orotate, leading to the formation of orotidine monophosphate (OMP). This chain is Orotate phosphoribosyltransferase, found in Cereibacter sphaeroides (strain KD131 / KCTC 12085) (Rhodobacter sphaeroides).